Consider the following 112-residue polypeptide: Glutaredoxin-C6 (112 aa).

Residues 3–103 enclose the Glutaredoxin domain; the sequence is LAKAKETVAS…PLLTEAGAIA (101 aa). Cys23 and Cys26 are disulfide-bonded.

Belongs to the glutaredoxin family. CPYC subfamily. In terms of processing, the N-terminus is blocked. As to expression, expressed in aleurone layer.

It localises to the cytoplasm. Has a glutathione-disulfide oxidoreductase activity in the presence of NADPH and glutathione reductase. Reduces low molecular weight disulfides and proteins. Possesses thioltransferase, dehydroascorbate reductase and GSH-dependent peroxidase activities in vitro. This chain is Glutaredoxin-C6 (GRXC6), found in Oryza sativa subsp. japonica (Rice).